The primary structure comprises 469 residues: MTPATKLPGDVGPIHFVGIGGIGMSGIAEVLLNLGYVVQGSDLKSSRITQRLERLGATIFEGQRAENLEDAEVVVISSAIKPGNAELDEARLRGLPVVRRAEMLAELMRLKSNIAIGGTHGKTTTTTMMAELMVAGGFDPTVVNGGIIHAYGSNARMGQGEWMVVEADESDGTFNRLPATIAVVTNIDPEHMEHWGDFDRLRDGFYEFVSNLPFYGLAVCCTDHAEVQALVGRITDRRVVTYGFNAQADVRAVNLTYKGGVAHFDILLQAEGQKIEGCTLPMPGDHNVSNALSAVAVCRHLGMKREEIRTALAAFGGVNRRFTKVGEVDGVTIIDDYGHHPVEIAAVLKAARQAIGTEGEGRVIAVHQPHRYSRLSNLFDDFCACFNDADVVAIAEVFAAGEDPIEGASRDDLVAGLIRHGHRHARAILNEDDLLRLVREQTRPGDMVVCLGAGTISAWANGLPERLRG.

G118–T124 contacts ATP.

This sequence belongs to the MurCDEF family.

The protein resides in the cytoplasm. It carries out the reaction UDP-N-acetyl-alpha-D-muramate + L-alanine + ATP = UDP-N-acetyl-alpha-D-muramoyl-L-alanine + ADP + phosphate + H(+). Its pathway is cell wall biogenesis; peptidoglycan biosynthesis. Cell wall formation. This is UDP-N-acetylmuramate--L-alanine ligase from Ruegeria sp. (strain TM1040) (Silicibacter sp.).